A 605-amino-acid chain; its full sequence is Condensin-2 complex subunit H2 (605 aa).

Position 19 is a phosphothreonine (threonine 19). Phosphoserine occurs at positions 95, 200, 208, 228, and 232. The interval 194-331 (LEPEGMSPME…PFDSLESKPF (138 aa)) is disordered. Over residues 256–266 (GEDEDAEEAVE) the composition is skewed to acidic residues. A phosphoserine mark is found at serine 282, serine 284, serine 466, and serine 492.

The protein belongs to the CND2 H2 (condensin-2 subunit 2) family. In terms of assembly, component of the condensin-2 complex, which contains the SMC2 and SMC4 heterodimer, and three non SMC subunits, NCAPG2, NCAPH2 and NCAPD3 that probably regulate the complex.

It is found in the nucleus. Its subcellular location is the chromosome. In terms of biological role, regulatory subunit of the condensin-2 complex, a complex that seems to provide chromosomes with an additional level of organization and rigidity and in establishing mitotic chromosome architecture. May promote the resolution of double-strand DNA catenanes (intertwines) between sister chromatids. Condensin-mediated compaction likely increases tension in catenated sister chromatids, providing directionality for type II topoisomerase-mediated strand exchanges toward chromatid decatenation. Required for decatenation of chromatin bridges at anaphase. Early in neurogenesis, may play an essential role to ensure accurate mitotic chromosome condensation in neuron stem cells, ultimately affecting neuron pool and cortex size. Seems to have lineage-specific role in T-cell development. The polypeptide is Condensin-2 complex subunit H2 (NCAPH2) (Homo sapiens (Human)).